A 61-amino-acid chain; its full sequence is Short neurotoxin 2 (61 aa).

Cystine bridges form between Cys3-Cys23, Cys17-Cys40, Cys42-Cys53, and Cys54-Cys59.

This sequence belongs to the three-finger toxin family. Short-chain subfamily. Type I alpha-neurotoxin sub-subfamily. As to expression, expressed by the venom gland.

It localises to the secreted. Binds to muscle nicotinic acetylcholine receptor (nAChR) and inhibit acetylcholine from binding to the receptor, thereby impairing neuromuscular transmission. This chain is Short neurotoxin 2, found in Naja annulifera (Banded Egyptian cobra).